Here is a 579-residue protein sequence, read N- to C-terminus: Folliculin (579 aa).

The interval 31–82 (QGAGSGDSPDQVEQAEEEEGGIQMSSRVRAHSPAEGASSESSSPGPKKSDMC) is disordered. Ser62 and Ser73 each carry phosphoserine. Low complexity predominate over residues 63-76 (PAEGASSESSSPGP). One can recognise a uDENN FLCN/SMCR8-type domain in the interval 86-242 (RSLAVGHPGY…RNGNAARSLT (157 aa)). A coiled-coil region spans residues 287 to 310 (EKLADLEEESESWDNSEAEEEEKA). Positions 294–308 (EESESWDNSEAEEEE) are enriched in acidic residues. Residues 294-323 (EESESWDNSEAEEEEKAPVTPEGAEGRELT) are disordered. Phosphoserine is present on residues Ser302, Ser406, Ser537, Ser542, and Ser571. In terms of domain architecture, cDENN FLCN/SMCR8-type spans 339–491 (QPPKLTGFKS…ILNKIEAALT (153 aa)). The dDENN FLCN/SMCR8-type domain maps to 493–558 (QNLSVDVVDQ…LLKFWMTGLS (66 aa)).

It belongs to the folliculin family. In terms of assembly, interacts (via C-terminus) with FNIP1 or FNIP2 (via C-terminus). Component of the lysosomal folliculin complex (LFC), composed of FLCN, FNIP1 (or FNIP2), RagA/RRAGA or RagB/RRAGB GDP-bound, RagC/RRAGC or RagD/RRAGD GTP-bound, and Ragulator. Interaction with FNIP1 or FNIP2 mediates indirect interaction with the PRKAA1, PRKAB1 and PRKAG1 subunits of 5'-AMP-activated protein kinase (AMPK). Interacts with HSP90AA1 in the presence of FNIP1. Interacts with HSP70, STUB1, CDC37, AHSA1, CCT2, STIP1, PTGES3 and PPP5C. Interacts with GABARAP; interaction takes place in the presence of FNIP1 and/or FNIP2. Interacts with RILP; the interaction is direct and promotes association between RILP and RAB34. Interacts with KIF3A and KIF3B. Interacts with lactate dehydrogenase LDHA, but not LDHB; the interaction is direct, may preferentially bind LDHA dimers rather than tetramers, and regulates LDHA activity, acting as an uncompetitive inhibitor. Post-translationally, phosphorylation by ULK1 modulates the interaction with GABARAP and is required to regulate autophagy. As to expression, highly expressed in adult heart, pancreas, and prostate with moderate expression in adult brain, kidney, liver, adipose tissue and lung.

It localises to the lysosome membrane. It is found in the cytoplasm. Its subcellular location is the cytosol. The protein resides in the cell projection. The protein localises to the cilium. It localises to the cytoskeleton. It is found in the microtubule organizing center. Its subcellular location is the centrosome. The protein resides in the spindle. The protein localises to the nucleus. GTPase-activating activity is inhibited in the folliculin complex (LFC), which stabilizes the GDP-bound state of RagA/RRAGA (or RagB/RRAGB), because Arg-164 is located far from the RagC/RRAGC or RagD/RRAGD nucleotide pocket. Disassembly of the LFC complex upon amino acid restimulation liberates the GTPase-activating activity. Functionally, multi-functional protein, involved in both the cellular response to amino acid availability and in the regulation of glycolysis. GTPase-activating protein that plays a key role in the cellular response to amino acid availability through regulation of the non-canonical mTORC1 signaling cascade controlling the MiT/TFE factors TFEB and TFE3. Activates mTORC1 by acting as a GTPase-activating protein: specifically stimulates GTP hydrolysis by RagC/RRAGC or RagD/RRAGD, promoting the conversion to the GDP-bound state of RagC/RRAGC or RagD/RRAGD, and thereby activating the kinase activity of mTORC1. The GTPase-activating activity is inhibited during starvation and activated in presence of nutrients. Acts as a key component for non-canonical mTORC1-dependent control of the MiT/TFE factors TFEB and TFE3, while it is not involved in mTORC1-dependent phosphorylation of canonical RPS6KB1/S6K1 and EIF4EBP1/4E-BP1. In low-amino acid conditions, the lysosomal folliculin complex (LFC) is formed on the membrane of lysosomes, which inhibits the GTPase-activating activity of FLCN, inactivates mTORC1 and maximizes nuclear translocation of TFEB and TFE3. Upon amino acid restimulation, RagA/RRAGA (or RagB/RRAGB) nucleotide exchange promotes disassembly of the LFC complex and liberates the GTPase-activating activity of FLCN, leading to activation of mTORC1 and subsequent cytoplasmic retention of TFEB and TFE3. Indirectly acts as a positive regulator of Wnt signaling by promoting mTOR-dependent cytoplasmic retention of MiT/TFE factor TFE3. Required for the exit of hematopoietic stem cell from pluripotency by promoting mTOR-dependent cytoplasmic retention of TFE3, thereby increasing Wnt signaling. Involved in the control of embryonic stem cells differentiation; together with LAMTOR1 it is necessary to recruit and activate RagC/RRAGC and RagD/RRAGD at the lysosomes, and to induce exit of embryonic stem cells from pluripotency via non-canonical, mTOR-independent TFE3 inactivation. Acts as an inhibitor of browning of adipose tissue by regulating mTOR-dependent cytoplasmic retention of TFE3. In response to flow stress, regulates STK11/LKB1 accumulation and mTORC1 activation through primary cilia: may act by recruiting STK11/LKB1 to primary cilia for activation of AMPK resided at basal bodies, causing mTORC1 down-regulation. Together with FNIP1 and/or FNIP2, regulates autophagy: following phosphorylation by ULK1, interacts with GABARAP and promotes autophagy. Required for starvation-induced perinuclear clustering of lysosomes by promoting association of RILP with its effector RAB34. Regulates glycolysis by binding to lactate dehydrogenase LDHA, acting as an uncompetitive inhibitor. This chain is Folliculin, found in Mus musculus (Mouse).